The following is a 244-amino-acid chain: Phosphoadenosine 5'-phosphosulfate reductase (244 aa).

The active-site Nucleophile; cysteine thiosulfonate intermediate is C239.

This sequence belongs to the PAPS reductase family. CysH subfamily.

It localises to the cytoplasm. The enzyme catalyses [thioredoxin]-disulfide + sulfite + adenosine 3',5'-bisphosphate + 2 H(+) = [thioredoxin]-dithiol + 3'-phosphoadenylyl sulfate. The protein operates within sulfur metabolism; hydrogen sulfide biosynthesis; sulfite from sulfate: step 3/3. In terms of biological role, catalyzes the formation of sulfite from phosphoadenosine 5'-phosphosulfate (PAPS) using thioredoxin as an electron donor. The polypeptide is Phosphoadenosine 5'-phosphosulfate reductase (Buchnera aphidicola subsp. Acyrthosiphon pisum (strain 5A)).